A 139-amino-acid chain; its full sequence is Mannose-specific lectin (139 aa).

The 109-residue stretch at 1–109 (DNILYSGETL…ARWATGTNIH (109 aa)) folds into the Bulb-type lectin domain. Q26, D28, N30, Y34, D37, K38, W41, A42, N44, Q57, D59, N61, Y65, I72, W73, N76, N83, Q89, D91, N93, Y97, and W102 together coordinate alpha-D-mannopyranose. C29 and C52 are disulfide-bonded.

As to quaternary structure, homotetramer; antiparallel. As to expression, detected in bulbs (at protein level).

The protein resides in the secreted. Functionally, mannose-specific lectin. Displays antiviral activity and therefore may contribute to defense against infections. Shows agglutinating activity towards rabbit erythrocytes. The chain is Mannose-specific lectin from Narcissus tazetta (Cream narcissus).